The following is a 470-amino-acid chain: Proline--tRNA ligase (470 aa).

The protein belongs to the class-II aminoacyl-tRNA synthetase family. ProS type 3 subfamily. As to quaternary structure, homodimer.

Its subcellular location is the cytoplasm. It catalyses the reaction tRNA(Pro) + L-proline + ATP = L-prolyl-tRNA(Pro) + AMP + diphosphate. Functionally, catalyzes the attachment of proline to tRNA(Pro) in a two-step reaction: proline is first activated by ATP to form Pro-AMP and then transferred to the acceptor end of tRNA(Pro). The polypeptide is Proline--tRNA ligase (Malacoplasma penetrans (strain HF-2) (Mycoplasma penetrans)).